Reading from the N-terminus, the 398-residue chain is Probable aminomethyltransferase (398 aa).

The protein belongs to the GcvT family. The glycine cleavage system is composed of four proteins: P, T, L and H.

It carries out the reaction N(6)-[(R)-S(8)-aminomethyldihydrolipoyl]-L-lysyl-[protein] + (6S)-5,6,7,8-tetrahydrofolate = N(6)-[(R)-dihydrolipoyl]-L-lysyl-[protein] + (6R)-5,10-methylene-5,6,7,8-tetrahydrofolate + NH4(+). Its function is as follows. The glycine cleavage system catalyzes the degradation of glycine. The polypeptide is Probable aminomethyltransferase (Thermococcus kodakarensis (strain ATCC BAA-918 / JCM 12380 / KOD1) (Pyrococcus kodakaraensis (strain KOD1))).